We begin with the raw amino-acid sequence, 427 residues long: Phosphatase PSR1 (427 aa).

S-palmitoyl cysteine attachment occurs at residues Cys9 and Cys10. Polar residues predominate over residues 14–34 (TTQSNSNSAYRQQQSSSLNKN). A disordered region spans residues 14-223 (TTQSNSNSAY…SNDADDEDDE (210 aa)). Residues 35-48 (RSVKHSNTKSRTRG) are compositionally biased toward basic residues. A compositionally biased stretch (polar residues) spans 49 to 80 (VHQTNSPPSKTNSAATFSSTERSTGKSGISTN). Residues 104–118 (KVEKRISKDDLYEEK) are compositionally biased toward basic and acidic residues. Ser110 carries the post-translational modification Phosphoserine. The segment covering 119 to 130 (YEVDEDEEIDDE) has biased composition (acidic residues). A compositionally biased stretch (basic and acidic residues) spans 131-151 (DNRRSRGIVQEKGDAVKDTSR). A Glycyl lysine isopeptide (Lys-Gly) (interchain with G-Cter in ubiquitin) cross-link involves residue Lys154. The span at 155 to 183 (QQQQQQQQSQPQPQPQSQSQSQSQSQSQQ) shows a compositional bias: low complexity. Residues 184–214 (RGPTVQVSSDHLIQDMNLSRVSSSSQASETS) show a composition bias toward polar residues. The region spanning 253–411 (STKGKKCLIL…LDIIPLLEDL (159 aa)) is the FCP1 homology domain.

Interacts with WHI2.

The protein resides in the cell membrane. Functionally, has phosphatase activity in vitro. Involved in the response to sodium and lithium ion stress (but not to potassium or sorbitol stress) by inducing transcription of the sodium pump ENA1/PMR2. Acts through a calcineurin-independent pathway and is functionally redundant with PSR2. Also involved in the general stress response; acts together with WHI2 to activate stress response element (STRE)-mediated gene expression, possibly through dephosphorylation of MSN2. This Saccharomyces cerevisiae (strain ATCC 204508 / S288c) (Baker's yeast) protein is Phosphatase PSR1 (PSR1).